A 145-amino-acid polypeptide reads, in one-letter code: Large ribosomal subunit protein uL13 (145 aa).

Belongs to the universal ribosomal protein uL13 family. Part of the 50S ribosomal subunit.

Functionally, this protein is one of the early assembly proteins of the 50S ribosomal subunit, although it is not seen to bind rRNA by itself. It is important during the early stages of 50S assembly. This Bacillus licheniformis (strain ATCC 14580 / DSM 13 / JCM 2505 / CCUG 7422 / NBRC 12200 / NCIMB 9375 / NCTC 10341 / NRRL NRS-1264 / Gibson 46) protein is Large ribosomal subunit protein uL13.